Reading from the N-terminus, the 405-residue chain is Eukaryotic initiation factor 4A (405 aa).

The Q motif motif lies at 31 to 59 (ECFEALNLEGDLLRGIFAYGFEKPSAIQQ). Positions 62-232 (IKPILDGYDT…TQFMRDPKRI (171 aa)) constitute a Helicase ATP-binding domain. 75–82 (AQSGTGKT) contacts ATP. Positions 180–183 (DEAD) match the DEAD box motif. The Helicase C-terminal domain occupies 243 to 404 (GIRQFYVGVE…EMPMGITDIL (162 aa)).

This sequence belongs to the DEAD box helicase family. eIF4A subfamily. EIF4F is a multi-subunit complex, the composition of which varies with external and internal environmental conditions. It is composed of at least EIF4A, EIF4E and EIF4G.

It carries out the reaction ATP + H2O = ADP + phosphate + H(+). In terms of biological role, ATP-dependent RNA helicase which is a subunit of the eIF4F complex involved in cap recognition and is required for mRNA binding to ribosome. In the current model of translation initiation, eIF4A unwinds RNA secondary structures in the 5'-UTR of mRNAs which is necessary to allow efficient binding of the small ribosomal subunit, and subsequent scanning for the initiator codon. The protein is Eukaryotic initiation factor 4A (EIF4-A) of Cryptosporidium parvum.